The following is a 304-amino-acid chain: Calcium release-activated calcium channel protein 1 (304 aa).

A compositionally biased stretch (pro residues) spans 1–11 (MHPEPAPPPSH). The interval 1–50 (MHPEPAPPPSHSNPELPVSGGSSTSGSRRSRRRSGDGEPSGAPPLPPPPP) is disordered. Topologically, residues 1–89 (MHPEPAPPPS…KLYLSRAKLK (89 aa)) are cytoplasmic. Positions 3 to 49 (PEPAPPPSHSNPELPVSGGSSTSGSRRSRRRSGDGEPSGAPPLPPPP) are required for generation of inwardly rectifying CRAC currents. Positions 12–27 (SNPELPVSGGSSTSGS) are enriched in low complexity. The interval 39–61 (PSGAPPLPPPPPAVSYPDWIGQS) is AKAP5 association region. A compositionally biased stretch (pro residues) spans 41–50 (GAPPLPPPPP). The interaction with STIM1 stretch occupies residues 72 to 92 (SMQALSWRKLYLSRAKLKASS). Residues 90-107 (ASSRTSALLSGFAMVAMV) form a helical membrane-spanning segment. The Extracellular segment spans residues 108-121 (EVQLDTDHDYPPGL). Residues 122–142 (LIVFSACTTVLVAVHLFALMI) traverse the membrane as a helical segment. At 143 to 175 (STCILPNIEAVSNVHNLNSVKESPHERMHRHIE) the chain is on the cytoplasmic side. The helical transmembrane segment at 176 to 196 (LAWAFSTVIGTLLFLAEVVLL) threads the bilayer. Residues 197–237 (CWVKFLPLKRQAGQPSPTKPPAESVIVANHSDSSGITPGEA) lie on the Extracellular side of the membrane. N-linked (GlcNAc...) asparagine glycosylation is present at Asn-225. The helical transmembrane segment at 238 to 258 (AAIASTAIMVPCGLVFIVFAV) threads the bilayer. Residues 259–304 (HFYRSLVSHKTDRQFQELNELAEFARLQDQLDHRGDHSLTPGTHYA) lie on the Cytoplasmic side of the membrane. The tract at residues 275-295 (ELNELAEFARLQDQLDHRGDH) is interaction with STIM1. Thr-298 is modified (phosphothreonine).

The protein belongs to the Orai family. As to quaternary structure, oligomerizes in homomeric and heteromeric ORAI complexes. Native CRAC channels most likely consist of hexameric ORAI heteromers, implying that diverse ORAI1, ORAI2 and ORAI3 subunit combinations with distinct biophysical properties can operate in a cell-type specific way. ARC channels are heteropentamers consisting of three ORAI1 and two ORAI3 subunits. Interacts with STIM1 and STIM2; this regulates channel activity. Interacts with CALM; this may displace STIM1 and STIM2 and might thereby modulate channel activity. Interacts (via N-terminus) with AKAP5 upon store depletion. Interacts with CRACR2A/EFCAB4B; the interaction is direct and takes place in absence of Ca(2+). Forms a complex with CRACR2A/EFCAB4B and STIM1 at low concentration of Ca(2+), the complex dissociates at elevated Ca(2+) concentrations. Interacts with ASPH (isoform 8). Interacts with SLC35G1. Interacts with UBQLN1. Interacts with ADCY8; interaction is calcium store depletion independent; interaction occurs in membrane raft; interaction increases markedly after store depletion; positively regulates SOCE-induced adenylate cyclase activity; contributes to the targeting of ADCY8 to discrete regions of the plasma membrane that are shielded from other calcium events. Interacts with EFHB; the interaction takes place upon Ca(2+)-store depletion. Interacts (via N- and C-termini) with ATP2C2 (via N-terminus); this interaction regulates Ca(2+) influx at the plasma membrane. Interacts with TSPAN18; this interaction regulates ORAI1 exit from the endoplasmic (ER), and/or Golgi, and trafficking to the cell surface. N-glycosylated. N-glycosylation inhibits channel activity in T cells. In terms of processing, ubiquitinated. Post-translationally, cys-195 is oxidated, leading to inactivation of channel activity. In terms of tissue distribution, expressed in lactating mammary epithelium (at protein level).

The protein resides in the cell membrane. It localises to the basolateral cell membrane. It carries out the reaction Ca(2+)(in) = Ca(2+)(out). With respect to regulation, oxidation at Cys-197 leads to inactivation of channel activity. Its function is as follows. Pore-forming subunit of two major inward rectifying Ca(2+) channels at the plasma membrane: Ca(2+) release-activated Ca(2+) (CRAC) channels and arachidonate-regulated Ca(2+)-selective (ARC) channels. Assembles with ORAI2 and ORAI3 to form hexameric CRAC channels that mediate Ca(2+) influx upon depletion of endoplasmic reticulum Ca(2+) store and channel activation by Ca(2+) sensor STIM1, a process known as store-operated Ca(2+) entry (SOCE). Various pore subunit combinations may account for distinct CRAC channel spatiotemporal and cell-type specific dynamics. ORAI1 mainly contributes to the generation of Ca(2+) plateaus involved in sustained Ca(2+) entry and is dispensable for cytosolic Ca(2+) oscillations, whereas ORAI2 and ORAI3 generate oscillatory patterns. CRAC channels assemble in Ca(2+) signaling microdomains where Ca(2+) influx is coupled to calmodulin and calcineurin signaling and activation of NFAT transcription factors recruited to ORAI1 via AKAP5. Activates NFATC2/NFAT1 and NFATC3/NFAT4-mediated transcriptional responses. CRAC channels are the main pathway for Ca(2+) influx in T cells and promote the immune response to pathogens by activating NFAT-dependent cytokine and chemokine transcription. Assembles with ORAI3 to form channels that mediate store-independent Ca(2+) influx in response to inflammatory metabolites arachidonate or its derivative leukotriene C4, termed ARC and LRC channels respectively. Plays a prominent role in Ca(2+) influx at the basolateral membrane of mammary epithelial cells independently of the Ca(2+) content of endoplasmic reticulum or Golgi stores. May mediate transepithelial transport of large quantities of Ca(2+) for milk secretion. The polypeptide is Calcium release-activated calcium channel protein 1 (Orai1) (Mus musculus (Mouse)).